The chain runs to 440 residues: tRNA(Ile)-lysidine synthase (440 aa).

25–30 provides a ligand contact to ATP; it reads SGGVDS.

Belongs to the tRNA(Ile)-lysidine synthase family.

It is found in the cytoplasm. It carries out the reaction cytidine(34) in tRNA(Ile2) + L-lysine + ATP = lysidine(34) in tRNA(Ile2) + AMP + diphosphate + H(+). Its function is as follows. Ligates lysine onto the cytidine present at position 34 of the AUA codon-specific tRNA(Ile) that contains the anticodon CAU, in an ATP-dependent manner. Cytidine is converted to lysidine, thus changing the amino acid specificity of the tRNA from methionine to isoleucine. The polypeptide is tRNA(Ile)-lysidine synthase (Vibrio cholerae serotype O1 (strain ATCC 39541 / Classical Ogawa 395 / O395)).